The following is a 260-amino-acid chain: Carbonic anhydrase 2 (260 aa).

The residue at position 2 (Ser2) is an N-acetylserine. At Ser2 the chain carries Phosphoserine. An Alpha-carbonic anhydrase domain is found at 3–259 (HHWGYGKHNG…LKNRQVRGFP (257 aa)). Catalysis depends on His64, which acts as the Proton donor/acceptor. 3 residues coordinate Zn(2+): His94, His96, and His119. Residues Ser165 and Ser172 each carry the phosphoserine modification. Substrate is bound at residue 198 to 199 (TT).

It belongs to the alpha-carbonic anhydrase family. Interacts with SLC4A4. Interaction with SLC4A7 regulates SLC4A7 transporter activity. Zn(2+) is required as a cofactor.

Its subcellular location is the cytoplasm. The protein localises to the cell membrane. It catalyses the reaction hydrogencarbonate + H(+) = CO2 + H2O. It carries out the reaction urea = cyanamide + H2O. With respect to regulation, inhibited by acetazolamide. Its function is as follows. Catalyzes the reversible hydration of carbon dioxide. Can also hydrate cyanamide to urea. Involved in the regulation of fluid secretion into the anterior chamber of the eye. Essential for bone resorption and osteoclast differentiation. Contributes to intracellular pH regulation in the duodenal upper villous epithelium during proton-coupled peptide absorption. Stimulates the chloride-bicarbonate exchange activity of SLC26A6. The chain is Carbonic anhydrase 2 (CA2) from Bos taurus (Bovine).